The following is a 318-amino-acid chain: L-lactate dehydrogenase (318 aa).

NAD(+)-binding positions include Val18, Asp39, Lys44, Tyr69, and 83–84 (GA). Gln86 and Arg92 together coordinate substrate. NAD(+) is bound by residues Ser105, 122–124 (VSN), and Ser147. Substrate is bound at residue 124 to 127 (NPVD). Substrate is bound at residue 152 to 155 (DTSR). The active-site Proton acceptor is the His179. Phosphotyrosine is present on Tyr225. Thr234 provides a ligand contact to substrate.

The protein belongs to the LDH/MDH superfamily. LDH family. In terms of assembly, homotetramer.

It is found in the cytoplasm. It catalyses the reaction (S)-lactate + NAD(+) = pyruvate + NADH + H(+). Its pathway is fermentation; pyruvate fermentation to lactate; (S)-lactate from pyruvate: step 1/1. Catalyzes the conversion of lactate to pyruvate. The protein is L-lactate dehydrogenase of Clostridium botulinum (strain ATCC 19397 / Type A).